We begin with the raw amino-acid sequence, 422 residues long: Bifunctional enzyme IspD/IspF (422 aa).

The tract at residues Met-1–Pro-267 is 2-C-methyl-D-erythritol 4-phosphate cytidylyltransferase. The interval Leu-268–Arg-422 is 2-C-methyl-D-erythritol 2,4-cyclodiphosphate synthase. Residues Asp-274 and His-276 each coordinate a divalent metal cation. 4-CDP-2-C-methyl-D-erythritol 2-phosphate is bound by residues Asp-274 to His-276 and His-301 to Ser-302. His-309 contacts a divalent metal cation. Residues Asp-323 to Gly-325, Phe-404, and Arg-407 each bind 4-CDP-2-C-methyl-D-erythritol 2-phosphate.

The protein in the N-terminal section; belongs to the IspD/TarI cytidylyltransferase family. IspD subfamily. This sequence in the C-terminal section; belongs to the IspF family. Requires a divalent metal cation as cofactor.

The enzyme catalyses 2-C-methyl-D-erythritol 4-phosphate + CTP + H(+) = 4-CDP-2-C-methyl-D-erythritol + diphosphate. It carries out the reaction 4-CDP-2-C-methyl-D-erythritol 2-phosphate = 2-C-methyl-D-erythritol 2,4-cyclic diphosphate + CMP. It functions in the pathway isoprenoid biosynthesis; isopentenyl diphosphate biosynthesis via DXP pathway; isopentenyl diphosphate from 1-deoxy-D-xylulose 5-phosphate: step 2/6. Its pathway is isoprenoid biosynthesis; isopentenyl diphosphate biosynthesis via DXP pathway; isopentenyl diphosphate from 1-deoxy-D-xylulose 5-phosphate: step 4/6. Its function is as follows. Bifunctional enzyme that catalyzes the formation of 4-diphosphocytidyl-2-C-methyl-D-erythritol from CTP and 2-C-methyl-D-erythritol 4-phosphate (MEP) (IspD), and catalyzes the conversion of 4-diphosphocytidyl-2-C-methyl-D-erythritol 2-phosphate (CDP-ME2P) to 2-C-methyl-D-erythritol 2,4-cyclodiphosphate (ME-CPP) with a corresponding release of cytidine 5-monophosphate (CMP) (IspF). This Tropheryma whipplei (strain TW08/27) (Whipple's bacillus) protein is Bifunctional enzyme IspD/IspF.